Here is a 281-residue protein sequence, read N- to C-terminus: Ribosomal protein L11 methyltransferase (281 aa).

S-adenosyl-L-methionine is bound by residues Thr133, Gly154, Asp175, and Asn216.

It belongs to the methyltransferase superfamily. PrmA family.

The protein localises to the cytoplasm. It catalyses the reaction L-lysyl-[protein] + 3 S-adenosyl-L-methionine = N(6),N(6),N(6)-trimethyl-L-lysyl-[protein] + 3 S-adenosyl-L-homocysteine + 3 H(+). Methylates ribosomal protein L11. The chain is Ribosomal protein L11 methyltransferase from Campylobacter jejuni subsp. jejuni serotype O:6 (strain 81116 / NCTC 11828).